Reading from the N-terminus, the 148-residue chain is Small ribosomal subunit protein uS15 (148 aa).

It belongs to the universal ribosomal protein uS15 family.

This is Small ribosomal subunit protein uS15 (RPS13) from Encephalitozoon cuniculi (strain GB-M1) (Microsporidian parasite).